Consider the following 343-residue polypeptide: Heat-inducible transcription repressor HrcA (343 aa).

Belongs to the HrcA family.

Functionally, negative regulator of class I heat shock genes (grpE-dnaK-dnaJ and groELS operons). Prevents heat-shock induction of these operons. In Mycobacterium ulcerans (strain Agy99), this protein is Heat-inducible transcription repressor HrcA.